A 321-amino-acid polypeptide reads, in one-letter code: Ubiquitin-conjugating enzyme E2 U (321 aa).

The UBC core domain maps to 4 to 153 (RAYLLLHRDF…LRLFNRPLQM (150 aa)). The Glycyl thioester intermediate role is filled by Cys89. A disordered region spans residues 285-321 (WKSDTSLYENDTDEPREEEVEDLISWTNTLNTNTSED). The span at 294-306 (NDTDEPREEEVED) shows a compositional bias: acidic residues. A compositionally biased stretch (polar residues) spans 309 to 321 (SWTNTLNTNTSED).

It belongs to the ubiquitin-conjugating enzyme family. Post-translationally, autoubiquitinated in vitro in the presence of UBR5.

It catalyses the reaction S-ubiquitinyl-[E1 ubiquitin-activating enzyme]-L-cysteine + [E2 ubiquitin-conjugating enzyme]-L-cysteine = [E1 ubiquitin-activating enzyme]-L-cysteine + S-ubiquitinyl-[E2 ubiquitin-conjugating enzyme]-L-cysteine.. Its pathway is protein modification; protein ubiquitination. Catalyzes the covalent attachment of ubiquitin to other proteins. The chain is Ubiquitin-conjugating enzyme E2 U (UBE2U) from Homo sapiens (Human).